We begin with the raw amino-acid sequence, 310 residues long: Olfactory receptor 2A1/2A42 (310 aa).

Topologically, residues 1 to 24 are extracellular; sequence MGENQTMVTEFLLLGFLLGPRIQM. N-linked (GlcNAc...) asparagine glycosylation is present at N4. A helical membrane pass occupies residues 25 to 48; it reads LLFGLFSLFYIFTLLGNGAILGLI. Over 49–56 the chain is Cytoplasmic; it reads SLDSRLHT. A helical transmembrane segment spans residues 57–78; that stretch reads PMYFFLSHLAVVDIAYTRNTVP. At 79–99 the chain is on the extracellular side; the sequence is QMLANLLHPAKPISFAGCMTQ. A disulfide bridge connects residues C96 and C188. The chain crosses the membrane as a helical span at residues 100–119; that stretch reads TFLCLSFGHSECLLLVLMSY. Residues 120–138 lie on the Cytoplasmic side of the membrane; the sequence is DRYVAICHPLRYSVIMTWR. The helical transmembrane segment at 139-157 threads the bilayer; sequence VCITLAVTSWTCGSLLALA. Residues 158–195 are Extracellular-facing; the sequence is HVVLILRLPFSGPHEINHFFCEILSVLRLACADTWLNQ. Residues 196–218 traverse the membrane as a helical segment; the sequence is VVIFAACVFFLVGPPSLVLVSYS. At 219 to 235 the chain is on the cytoplasmic side; that stretch reads HILAAILRIQSGEGRRK. Residues 236–258 traverse the membrane as a helical segment; the sequence is AFSTCSSHLCVVGLFFGSAIIMY. Topologically, residues 259–271 are extracellular; sequence MAPKSRHPEEQQK. The chain crosses the membrane as a helical span at residues 272-291; that stretch reads VFFLFYSFFNPTLNPLIYSL. The Cytoplasmic portion of the chain corresponds to 292-310; the sequence is RNGEVKGALRRALGKESHS.

It belongs to the G-protein coupled receptor 1 family.

The protein resides in the cell membrane. Odorant receptor. This Homo sapiens (Human) protein is Olfactory receptor 2A1/2A42 (OR2A1).